We begin with the raw amino-acid sequence, 332 residues long: Lipoyl synthase (332 aa).

Residues Cys-74, Cys-79, Cys-85, Cys-100, Cys-104, Cys-107, and Ser-314 each coordinate [4Fe-4S] cluster. Residues 85–303 (CFGKGTATFM…EEEAYKMGFT (219 aa)) form the Radical SAM core domain.

Belongs to the radical SAM superfamily. Lipoyl synthase family. Requires [4Fe-4S] cluster as cofactor.

It localises to the cytoplasm. The enzyme catalyses [[Fe-S] cluster scaffold protein carrying a second [4Fe-4S](2+) cluster] + N(6)-octanoyl-L-lysyl-[protein] + 2 oxidized [2Fe-2S]-[ferredoxin] + 2 S-adenosyl-L-methionine + 4 H(+) = [[Fe-S] cluster scaffold protein] + N(6)-[(R)-dihydrolipoyl]-L-lysyl-[protein] + 4 Fe(3+) + 2 hydrogen sulfide + 2 5'-deoxyadenosine + 2 L-methionine + 2 reduced [2Fe-2S]-[ferredoxin]. The protein operates within protein modification; protein lipoylation via endogenous pathway; protein N(6)-(lipoyl)lysine from octanoyl-[acyl-carrier-protein]: step 2/2. Functionally, catalyzes the radical-mediated insertion of two sulfur atoms into the C-6 and C-8 positions of the octanoyl moiety bound to the lipoyl domains of lipoate-dependent enzymes, thereby converting the octanoylated domains into lipoylated derivatives. This is Lipoyl synthase from Paracidovorax citrulli (strain AAC00-1) (Acidovorax citrulli).